The primary structure comprises 118 residues: Large ribosomal subunit protein uL18 (118 aa).

This sequence belongs to the universal ribosomal protein uL18 family. In terms of assembly, part of the 50S ribosomal subunit; part of the 5S rRNA/L5/L18/L25 subcomplex. Contacts the 5S and 23S rRNAs.

This is one of the proteins that bind and probably mediate the attachment of the 5S RNA into the large ribosomal subunit, where it forms part of the central protuberance. The chain is Large ribosomal subunit protein uL18 from Campylobacter concisus (strain 13826).